Here is a 657-residue protein sequence, read N- to C-terminus: Replication restart protein PriA (657 aa).

Residues 143 to 309 form the Helicase ATP-binding domain; sequence ITASTGARSF…LRGAVRRLPL (167 aa). ATP is bound at residue 156-163; sequence GVTGSGKT. The DEAH box signature appears at 252 to 255; that stretch reads DEEH. 8 residues coordinate Zn(2+): Cys366, Cys369, Cys375, Cys378, Cys393, Cys396, Cys406, and Cys409. Residues 390–570 enclose the Helicase C-terminal domain; the sequence is AMQCHYCGRQ…PFVRLIRFVF (181 aa).

It belongs to the helicase family. PriA subfamily. Component of the replication restart primosome. Requires Zn(2+) as cofactor.

It catalyses the reaction Couples ATP hydrolysis with the unwinding of duplex DNA by translocating in the 3'-5' direction.. The enzyme catalyses ATP + H2O = ADP + phosphate + H(+). Its function is as follows. Initiates the restart of stalled replication forks, which reloads the replicative helicase on sites other than the origin of replication. Recognizes and binds to abandoned replication forks and remodels them to uncover a helicase loading site. Promotes assembly of the primosome at these replication forks. This is Replication restart protein PriA from Treponema pallidum (strain Nichols).